Here is a 547-residue protein sequence, read N- to C-terminus: Chaperonin GroEL (547 aa).

ATP contacts are provided by residues 30-33 (TLGP), Lys-51, 87-91 (DGTTT), Gly-415, and Asp-495.

It belongs to the chaperonin (HSP60) family. Forms a cylinder of 14 subunits composed of two heptameric rings stacked back-to-back. Interacts with the co-chaperonin GroES.

It localises to the cytoplasm. It carries out the reaction ATP + H2O + a folded polypeptide = ADP + phosphate + an unfolded polypeptide.. Together with its co-chaperonin GroES, plays an essential role in assisting protein folding. The GroEL-GroES system forms a nano-cage that allows encapsulation of the non-native substrate proteins and provides a physical environment optimized to promote and accelerate protein folding. This is Chaperonin GroEL from Pasteurella multocida (strain Pm70).